A 247-amino-acid chain; its full sequence is Ubiquinone biosynthesis O-methyltransferase (247 aa).

Residues Arg41, Gly72, Asp93, and Met136 each coordinate S-adenosyl-L-methionine.

Belongs to the methyltransferase superfamily. UbiG/COQ3 family.

It carries out the reaction a 3-demethylubiquinol + S-adenosyl-L-methionine = a ubiquinol + S-adenosyl-L-homocysteine + H(+). The catalysed reaction is a 3-(all-trans-polyprenyl)benzene-1,2-diol + S-adenosyl-L-methionine = a 2-methoxy-6-(all-trans-polyprenyl)phenol + S-adenosyl-L-homocysteine + H(+). Its pathway is cofactor biosynthesis; ubiquinone biosynthesis. In terms of biological role, O-methyltransferase that catalyzes the 2 O-methylation steps in the ubiquinone biosynthetic pathway. This chain is Ubiquinone biosynthesis O-methyltransferase, found in Bartonella quintana (strain Toulouse) (Rochalimaea quintana).